The chain runs to 531 residues: Peptide chain release factor 3 (531 aa).

The region spanning 10 to 278 (RRRRTFAIIS…SLIEWAPAPK (269 aa)) is the tr-type G domain. GTP is bound by residues 19 to 26 (SHPDAGKT), 87 to 91 (DTPGH), and 141 to 144 (NKYD).

The protein belongs to the TRAFAC class translation factor GTPase superfamily. Classic translation factor GTPase family. PrfC subfamily.

It is found in the cytoplasm. Its function is as follows. Increases the formation of ribosomal termination complexes and stimulates activities of RF-1 and RF-2. It binds guanine nucleotides and has strong preference for UGA stop codons. It may interact directly with the ribosome. The stimulation of RF-1 and RF-2 is significantly reduced by GTP and GDP, but not by GMP. The protein is Peptide chain release factor 3 of Neisseria meningitidis serogroup A / serotype 4A (strain DSM 15465 / Z2491).